A 180-amino-acid chain; its full sequence is Putative 3-methyladenine DNA glycosylase (180 aa).

It belongs to the DNA glycosylase MPG family.

The polypeptide is Putative 3-methyladenine DNA glycosylase (Ehrlichia chaffeensis (strain ATCC CRL-10679 / Arkansas)).